The sequence spans 248 residues: Ubiquinone/menaquinone biosynthesis C-methyltransferase UbiE (248 aa).

S-adenosyl-L-methionine is bound by residues Ser-68 and Asp-92.

Belongs to the class I-like SAM-binding methyltransferase superfamily. MenG/UbiE family.

The catalysed reaction is a 2-demethylmenaquinol + S-adenosyl-L-methionine = a menaquinol + S-adenosyl-L-homocysteine + H(+). It catalyses the reaction a 2-methoxy-6-(all-trans-polyprenyl)benzene-1,4-diol + S-adenosyl-L-methionine = a 5-methoxy-2-methyl-3-(all-trans-polyprenyl)benzene-1,4-diol + S-adenosyl-L-homocysteine + H(+). The protein operates within quinol/quinone metabolism; menaquinone biosynthesis; menaquinol from 1,4-dihydroxy-2-naphthoate: step 2/2. Its pathway is cofactor biosynthesis; ubiquinone biosynthesis. Its function is as follows. Methyltransferase required for the conversion of demethylmenaquinol (DMKH2) to menaquinol (MKH2) and the conversion of 2-polyprenyl-6-methoxy-1,4-benzoquinol (DDMQH2) to 2-polyprenyl-3-methyl-6-methoxy-1,4-benzoquinol (DMQH2). The chain is Ubiquinone/menaquinone biosynthesis C-methyltransferase UbiE from Rickettsia akari (strain Hartford).